A 98-amino-acid chain; its full sequence is NADH-ubiquinone oxidoreductase chain 4L (98 aa).

Helical transmembrane passes span 1–21 (MPFI…GLLI), 29–49 (SLLC…TMTL), and 61–81 (IILL…LILI).

It belongs to the complex I subunit 4L family. Core subunit of respiratory chain NADH dehydrogenase (Complex I) which is composed of 45 different subunits.

The protein resides in the mitochondrion inner membrane. It carries out the reaction a ubiquinone + NADH + 5 H(+)(in) = a ubiquinol + NAD(+) + 4 H(+)(out). Its function is as follows. Core subunit of the mitochondrial membrane respiratory chain NADH dehydrogenase (Complex I) which catalyzes electron transfer from NADH through the respiratory chain, using ubiquinone as an electron acceptor. Part of the enzyme membrane arm which is embedded in the lipid bilayer and involved in proton translocation. The sequence is that of NADH-ubiquinone oxidoreductase chain 4L (MT-ND4L) from Cebus albifrons (White-fronted capuchin).